The following is a 258-amino-acid chain: Acyl-[acyl-carrier-protein]--UDP-N-acetylglucosamine O-acyltransferase (258 aa).

This sequence belongs to the transferase hexapeptide repeat family. LpxA subfamily. As to quaternary structure, homotrimer.

Its subcellular location is the cytoplasm. It carries out the reaction a (3R)-hydroxyacyl-[ACP] + UDP-N-acetyl-alpha-D-glucosamine = a UDP-3-O-[(3R)-3-hydroxyacyl]-N-acetyl-alpha-D-glucosamine + holo-[ACP]. It participates in glycolipid biosynthesis; lipid IV(A) biosynthesis; lipid IV(A) from (3R)-3-hydroxytetradecanoyl-[acyl-carrier-protein] and UDP-N-acetyl-alpha-D-glucosamine: step 1/6. Functionally, involved in the biosynthesis of lipid A, a phosphorylated glycolipid that anchors the lipopolysaccharide to the outer membrane of the cell. The polypeptide is Acyl-[acyl-carrier-protein]--UDP-N-acetylglucosamine O-acyltransferase (Syntrophobacter fumaroxidans (strain DSM 10017 / MPOB)).